Here is a 94-residue protein sequence, read N- to C-terminus: Fungal defensin scedosporisin-2 (94 aa).

A signal peptide spans 1-25 (MKFSNISIAALFTILASTAMAAPAA). A propeptide spanning residues 26–56 (DSPDSIVAREPAPVEETYEAPSGLEKRGFGC) is cleaved from the precursor. The beta-D-GlcNAc-(1-&gt;4)-Mur2Ac(oyl-L-Ala-gamma-D-Glu-L-Lys-D-Ala-D-Ala)-di-trans,octa-cis-undecaprenyl diphosphate site is built by Phe54, Gly55, and Cys56. 3 cysteine pairs are disulfide-bonded: Cys56–Cys78, Cys63–Cys91, and Cys67–Cys93. Residues 57–60 (PGSE) form an interaction site with membrane interface region. His66 is a binding site for beta-D-GlcNAc-(1-&gt;4)-Mur2Ac(oyl-L-Ala-gamma-D-Glu-L-Lys-D-Ala-D-Ala)-di-trans,octa-cis-undecaprenyl diphosphate. The interval 83-90 (IPFVGRPR) is interaction site with membrane interface. Cys91 serves as a coordination point for beta-D-GlcNAc-(1-&gt;4)-Mur2Ac(oyl-L-Ala-gamma-D-Glu-L-Lys-D-Ala-D-Ala)-di-trans,octa-cis-undecaprenyl diphosphate.

Belongs to the invertebrate defensin family.

The protein resides in the secreted. It is found in the target cell membrane. Functionally, antibacterial peptide potently active against Gram-positive bacteria. May act by selectively inhibiting peptidoglycan biosynthesis through complex formation with the cell wall precursor lipid II (1:1 molar ratio) thus inhibiting cell wall synthesis. Shows remarkably activity against resistant isolates such as methicillin-resistant Staphylococcus aureus (MRSA) and vancomycin-resistant Enterococci (VRE) at the concentration of micromolar level. Does not act by destroying the membrane integrity, which is consistent with its nonamphiphilic architecture. Acts more rapidly than vancomycin. Shows low hemolysis and cytotoxicity and high serum stability. In vivo, is as efficient as vancomycin to protect mouse peritonitis models from MRSA infections. The polypeptide is Fungal defensin scedosporisin-2 (Pseudallescheria apiosperma (Scedosporium apiospermum)).